A 122-amino-acid chain; its full sequence is T cell receptor gamma variable 9 (122 aa).

An N-terminal signal peptide occupies residues M1–G20. Residues P27 to V122 enclose the Ig-like domain. C43 and C117 form a disulfide bridge.

In terms of assembly, gamma-delta TR is a heterodimer composed of a gamma and delta chain; disulfide-linked. The gamma-delta TR is associated with the transmembrane signaling CD3 coreceptor proteins following the stoichiometry: a single gamma-delta TR heterodimer associates with one CD3D-CD3E heterodimer, one CD3G-CD3E heterodimer and one CD247 homodimer forming a stable octameric structure. Upon activation, gamma-delta TR complex associates with FCER1G to initiate intracellular signaling.

The protein resides in the cell membrane. In terms of biological role, v region of the variable domain of T cell receptor (TR) gamma chain that participates in the antigen recognition. Gamma-delta TRs recognize a variety of self and foreign non-peptide antigens frequently expressed at the epithelial boundaries between the host and external environment, including endogenous lipids presented by MH-like protein CD1D and phosphoantigens presented by butyrophilin-like molecule BTN3A1. Upon antigen recognition induces rapid, innate-like immune responses involved in pathogen clearance and tissue repair. Binding of gamma-delta TR complex to antigen triggers phosphorylation of immunoreceptor tyrosine-based activation motifs (ITAMs) in the CD3 chains by the LCK and FYN kinases, allowing the recruitment, phosphorylation, and activation of ZAP70 that facilitates phosphorylation of the scaffolding proteins LCP2 and LAT. This lead to the formation of a supramolecular signalosome that recruits the phospholipase PLCG1, resulting in calcium mobilization and ERK activation, ultimately leading to T cell expansion and differentiation into effector cells. Gamma-delta TRs are produced through somatic rearrangement of a limited repertoire of variable (V), diversity (D), and joining (J) genes. The potential diversity of gamma-delta TRs is conferred by the unique ability to rearrange (D) genes in tandem and to utilize all three reading frames. The combinatorial diversity is considerably increased by the sequence exonuclease trimming and random nucleotide (N) region additions which occur during the V-(D)-J rearrangements. The polypeptide is T cell receptor gamma variable 9 (Homo sapiens (Human)).